Here is a 1497-residue protein sequence, read N- to C-terminus: DNA-directed RNA polymerase subunit beta' (1497 aa).

4 residues coordinate Zn(2+): Cys67, Cys69, Cys82, and Cys85. The Mg(2+) site is built by Asp499, Asp501, and Asp503. Zn(2+) contacts are provided by Cys867, Cys943, Cys950, and Cys953. The interval 1476–1497 (ESNATERVVEEPATREGFANER) is disordered. The span at 1482 to 1497 (RVVEEPATREGFANER) shows a compositional bias: basic and acidic residues.

It belongs to the RNA polymerase beta' chain family. As to quaternary structure, the RNAP catalytic core consists of 2 alpha, 1 beta, 1 beta' and 1 omega subunit. When a sigma factor is associated with the core the holoenzyme is formed, which can initiate transcription. Requires Mg(2+) as cofactor. Zn(2+) serves as cofactor.

The enzyme catalyses RNA(n) + a ribonucleoside 5'-triphosphate = RNA(n+1) + diphosphate. Its function is as follows. DNA-dependent RNA polymerase catalyzes the transcription of DNA into RNA using the four ribonucleoside triphosphates as substrates. This Pelodictyon phaeoclathratiforme (strain DSM 5477 / BU-1) protein is DNA-directed RNA polymerase subunit beta'.